Consider the following 290-residue polypeptide: Forkhead box protein O3B (290 aa).

Disordered regions lie at residues 1-30 (METDLAEMPEKGVLSSQDSPHFQEKSTEEG) and 44-239 (AAAA…SSRR). 2 stretches are compositionally biased toward low complexity: residues 44–59 (AAAAAAPGSRSLRGVH) and 75–91 (RTPAAAGRAAKMAEAPA). A Phosphothreonine; by PKB/AKT1 modification is found at threonine 117. Acidic residues predominate over residues 142–153 (IPEEEDDEDDED). A DNA-binding region (fork-head) is located at residues 242-290 (WGNLSYADLITRAIESSPDRRLTLSQIYEWMVSCVPYFKDKGNSNSSAG).

The protein localises to the cytoplasm. It localises to the cytosol. Its function is as follows. Transcription factor. This Homo sapiens (Human) protein is Forkhead box protein O3B.